Consider the following 610-residue polypeptide: DNA mismatch repair protein MutL (610 aa).

Belongs to the DNA mismatch repair MutL/HexB family.

This protein is involved in the repair of mismatches in DNA. It is required for dam-dependent methyl-directed DNA mismatch repair. May act as a 'molecular matchmaker', a protein that promotes the formation of a stable complex between two or more DNA-binding proteins in an ATP-dependent manner without itself being part of a final effector complex. In Rickettsia peacockii (strain Rustic), this protein is DNA mismatch repair protein MutL.